We begin with the raw amino-acid sequence, 736 residues long: Myosin-7 (736 aa).

The Myosin motor domain maps to 1-342; sequence NWMVTRINAT…LLGLLEEMRD (342 aa). The actin-binding stretch occupies residues 219 to 241; it reads LNKLMTNLRSTHPHFVRCIIPNE. The IQ domain occupies 345–374; the sequence is LSRIITRIQAQSRGVLSRMEYKKLLERRDS. Positions 403 to 736 form a coiled coil; that stretch reads LLKSAETEKE…MNKKREAEFQ (334 aa). At Ser-701 the chain carries Phosphoserine. Residues 716–736 are disordered; the sequence is EAGGATSVQIEMNKKREAEFQ. The span at 727–736 shows a compositional bias: basic and acidic residues; the sequence is MNKKREAEFQ.

This sequence belongs to the TRAFAC class myosin-kinesin ATPase superfamily. Myosin family. Muscle myosin is a hexameric protein that consists of 2 heavy chain subunits (MHC), 2 alkali light chain subunits (MLC) and 2 regulatory light chain subunits (MLC-2). Interacts with ECPAS. Interacts (via C-terminus) with LRRC39.

Its subcellular location is the cytoplasm. It is found in the myofibril. It localises to the sarcomere. Myosins are actin-based motor molecules with ATPase activity essential for muscle contraction. Forms regular bipolar thick filaments that, together with actin thin filaments, constitute the fundamental contractile unit of skeletal and cardiac muscle. This Oryctolagus cuniculus (Rabbit) protein is Myosin-7 (MYH7).